A 334-amino-acid chain; its full sequence is Holliday junction branch migration complex subunit RuvB (334 aa).

The segment at 1–182 (MNERMVDQSM…FGVHLRLEYY (182 aa)) is large ATPase domain (RuvB-L). ATP is bound by residues Leu21, Arg22, Gly63, Lys66, Thr67, Thr68, 129-131 (EDF), Arg172, Tyr182, and Arg219. Thr67 serves as a coordination point for Mg(2+). Residues 183–253 (NESDLKEIII…TTKHALGLLQ (71 aa)) form a small ATPAse domain (RuvB-S) region. Positions 256-334 (QHGLDYIDHK…HFAKSNEERE (79 aa)) are head domain (RuvB-H). DNA-binding residues include Arg292, Arg311, and Arg316.

It belongs to the RuvB family. In terms of assembly, homohexamer. Forms an RuvA(8)-RuvB(12)-Holliday junction (HJ) complex. HJ DNA is sandwiched between 2 RuvA tetramers; dsDNA enters through RuvA and exits via RuvB. An RuvB hexamer assembles on each DNA strand where it exits the tetramer. Each RuvB hexamer is contacted by two RuvA subunits (via domain III) on 2 adjacent RuvB subunits; this complex drives branch migration. In the full resolvosome a probable DNA-RuvA(4)-RuvB(12)-RuvC(2) complex forms which resolves the HJ.

Its subcellular location is the cytoplasm. It carries out the reaction ATP + H2O = ADP + phosphate + H(+). Functionally, the RuvA-RuvB-RuvC complex processes Holliday junction (HJ) DNA during genetic recombination and DNA repair, while the RuvA-RuvB complex plays an important role in the rescue of blocked DNA replication forks via replication fork reversal (RFR). RuvA specifically binds to HJ cruciform DNA, conferring on it an open structure. The RuvB hexamer acts as an ATP-dependent pump, pulling dsDNA into and through the RuvAB complex. RuvB forms 2 homohexamers on either side of HJ DNA bound by 1 or 2 RuvA tetramers; 4 subunits per hexamer contact DNA at a time. Coordinated motions by a converter formed by DNA-disengaged RuvB subunits stimulates ATP hydrolysis and nucleotide exchange. Immobilization of the converter enables RuvB to convert the ATP-contained energy into a lever motion, pulling 2 nucleotides of DNA out of the RuvA tetramer per ATP hydrolyzed, thus driving DNA branch migration. The RuvB motors rotate together with the DNA substrate, which together with the progressing nucleotide cycle form the mechanistic basis for DNA recombination by continuous HJ branch migration. Branch migration allows RuvC to scan DNA until it finds its consensus sequence, where it cleaves and resolves cruciform DNA. The protein is Holliday junction branch migration complex subunit RuvB of Staphylococcus aureus (strain bovine RF122 / ET3-1).